A 1265-amino-acid chain; its full sequence is Dynactin subunit 1 (1265 aa).

The CAP-Gly domain maps to 27-69 (GMTSFAVGKWVGVVLDEPKGKNSGSIKGQQYFQCDENCGMFVR). The disordered stretch occupies residues 81 to 179 (GSRRSIEDVS…GNGAASHASS (99 aa)). Phosphoserine is present on residues Ser85, Ser110, Ser114, Ser117, and Ser121. 2 stretches are compositionally biased toward low complexity: residues 103–138 (RLSS…SSSS) and 161–177 (AEGA…ASHA). Ser183 carries the phosphoserine modification. Coiled coils occupy residues 213–570 (NSGA…ESLQ), 812–836 (LIQF…RLPS), and 967–1084 (QRAQ…NSTT). A disordered region spans residues 1082 to 1106 (STTGKVQPGSESHSPHNISLSGNTS). Ser1117 is modified (phosphoserine). The stretch at 1128–1160 (EEVELLKNAFNQERNQRLRLQAQDMRAKLSQFE) forms a coiled coil.

It belongs to the dynactin 150 kDa subunit family. In terms of assembly, monomer and homodimer. Subunit of dynactin, a multiprotein complex part of a tripartite complex with dynein and a adapter, such as BICDL1, BICD2 or HOOK3. The dynactin complex is built around ACTR1A/ACTB filament and consists of an actin-related filament composed of a shoulder domain, a pointed end and a barbed end. Its length is defined by its flexible shoulder domain. The soulder is composed of 2 DCTN1 subunits, 4 DCTN2 and 2 DCTN3. DCTN1/p150(glued) binds directly to microtubules and to cytoplasmic dynein.

Its subcellular location is the cytoplasm. The protein resides in the cytoskeleton. Its function is as follows. Part of the dynactin complex that activates the molecular motor dynein for ultra-processive transport along microtubules. Plays a key role in dynein-mediated retrograde transport of vesicles and organelles along microtubules by recruiting and tethering dynein to microtubules. Binds to both dynein and microtubules providing a link between specific cargos, microtubules and dynein. Essential for targeting dynein to microtubule plus ends, recruiting dynein to membranous cargos and enhancing dynein processivity (the ability to move along a microtubule for a long distance without falling off the track). Can also act as a brake to slow the dynein motor during motility along the microtubule. Can regulate microtubule stability by promoting microtubule formation, nucleation and polymerization and by inhibiting microtubule catastrophe in neurons. Inhibits microtubule catastrophe by binding both to microtubules and to tubulin, leading to enhanced microtubule stability along the axon. Plays a role in metaphase spindle orientation. Plays a role in centriole cohesion and subdistal appendage organization and function. Its recruitment to the centriole in a KIF3A-dependent manner is essential for the maintenance of centriole cohesion and the formation of subdistal appendage. Also required for microtubule anchoring at the mother centriole. Plays a role in primary cilia formation. This chain is Dynactin subunit 1, found in Drosophila melanogaster (Fruit fly).